The sequence spans 452 residues: uncharacterized protein (452 aa).

Residues Met1–Leu452 form a disordered region. Polar residues-rich tracts occupy residues Arg29–Asn41, Ser95–Asn111, Ser129–Arg144, and Ser163–Ser176. Positions Asn177 to Gly193 are enriched in basic and acidic residues. 7 stretches are compositionally biased toward polar residues: residues Ser197 to Arg212, Ser231 to Asn245, Ser265 to Arg280, Ser299 to Arg314, Ser333 to Lys347, Thr376 to Asn394, and Ser412 to Asn426. Basic and acidic residues predominate over residues Glu439 to Leu452.

This is an uncharacterized protein from Homo sapiens (Human).